Reading from the N-terminus, the 475-residue chain is Pyruvate kinase (475 aa).

Arg33 contacts substrate. Residues Asn35, Ser37, and Asp67 each coordinate K(+). 35 to 38 contacts ATP; it reads NFSH. Residues Arg74 and Lys155 each contribute to the ATP site. Glu220 provides a ligand contact to Mg(2+). Substrate is bound by residues Gly243, Asp244, and Thr276. A Mg(2+)-binding site is contributed by Asp244.

Belongs to the pyruvate kinase family. Homotetramer. Mg(2+) serves as cofactor. It depends on K(+) as a cofactor.

The catalysed reaction is pyruvate + ATP = phosphoenolpyruvate + ADP + H(+). It functions in the pathway carbohydrate degradation; glycolysis; pyruvate from D-glyceraldehyde 3-phosphate: step 5/5. This chain is Pyruvate kinase (pyk), found in Corynebacterium glutamicum (strain ATCC 13032 / DSM 20300 / JCM 1318 / BCRC 11384 / CCUG 27702 / LMG 3730 / NBRC 12168 / NCIMB 10025 / NRRL B-2784 / 534).